The sequence spans 189 residues: Adenylate kinase homolog MTH_1663 (189 aa).

12 to 20 provides a ligand contact to ATP; the sequence is GVPGTGKTT.

This sequence belongs to the archaeal adenylate kinase family.

The chain is Adenylate kinase homolog MTH_1663 from Methanothermobacter thermautotrophicus (strain ATCC 29096 / DSM 1053 / JCM 10044 / NBRC 100330 / Delta H) (Methanobacterium thermoautotrophicum).